We begin with the raw amino-acid sequence, 176 residues long: Inner membrane assembly complex subunit 17 (176 aa).

Residues 1 to 28 constitute a mitochondrion transit peptide; that stretch reads MLRVLPTSFKSISTRSAFRACQLSPLTV. The Mitochondrial matrix segment spans residues 29–98; that stretch reads YCPLKSSQGT…MSQEVSLKRF (70 aa). The helical transmembrane segment at 99–121 threads the bilayer; that stretch reads VRPLWVFFLMSSTVYLILHYVWW. Residues 122–176 are Mitochondrial intermembrane-facing; sequence KLEVVEKEKELQSHVESLEMELDQTLKSQNQNVSSSQNNGNNKTNDKPWYRKWFF. A coiled-coil region spans residues 123-151; the sequence is LEVVEKEKELQSHVESLEMELDQTLKSQN. Positions 149–163 are enriched in low complexity; sequence SQNQNVSSSQNNGNN. Positions 149–168 are disordered; that stretch reads SQNQNVSSSQNNGNNKTNDK.

It belongs to the INA17 family. Component of the inner membrane assembly (INA) complex, composed of INA17 and INA22. Interacts with a subset of F(1)F(0)-ATP synthase subunits of the F(1)-domain and the peripheral stalk.

It is found in the mitochondrion inner membrane. Functionally, component of the INA complex (INAC) that promotes the biogenesis of mitochondrial F(1)F(0)-ATP synthase. INAC facilitates the assembly of the peripheral stalk and promotes the assembly of the catalytic F(1)-domain with the membrane-embedded F(0)-domain. The sequence is that of Inner membrane assembly complex subunit 17 from Zygosaccharomyces rouxii (strain ATCC 2623 / CBS 732 / NBRC 1130 / NCYC 568 / NRRL Y-229).